We begin with the raw amino-acid sequence, 459 residues long: tRNA modification GTPase MnmE (459 aa).

Positions 23, 88, and 127 each coordinate (6S)-5-formyl-5,6,7,8-tetrahydrofolate. The TrmE-type G domain maps to 223–381 (GLDVVIVGKP…LKEYIKDLFF (159 aa)). Asn-233 serves as a coordination point for K(+). GTP is bound by residues 233–238 (NVGKSS), 252–258 (TEIPGTT), and 277–280 (DTAG). Ser-237 provides a ligand contact to Mg(2+). 3 residues coordinate K(+): Thr-252, Ile-254, and Thr-257. Thr-258 lines the Mg(2+) pocket. A (6S)-5-formyl-5,6,7,8-tetrahydrofolate-binding site is contributed by Lys-459.

The protein belongs to the TRAFAC class TrmE-Era-EngA-EngB-Septin-like GTPase superfamily. TrmE GTPase family. In terms of assembly, homodimer. Heterotetramer of two MnmE and two MnmG subunits. The cofactor is K(+).

The protein localises to the cytoplasm. Exhibits a very high intrinsic GTPase hydrolysis rate. Involved in the addition of a carboxymethylaminomethyl (cmnm) group at the wobble position (U34) of certain tRNAs, forming tRNA-cmnm(5)s(2)U34. This is tRNA modification GTPase MnmE from Clostridium tetani (strain Massachusetts / E88).